Consider the following 135-residue polypeptide: Cytochrome b5, seed isoform (135 aa).

Residues 5–81 (SKVFTLAEVS…LDEYYVGDID (77 aa)) enclose the Cytochrome b5 heme-binding domain. Heme is bound by residues His40 and His64. The helical transmembrane segment at 107–127 (FIVKLLQFLVPLIILGVAFGV) threads the bilayer.

Belongs to the cytochrome b5 family. As to expression, specifically expressed in developing seeds.

Its subcellular location is the endoplasmic reticulum membrane. It localises to the microsome membrane. In terms of biological role, cytochrome b5 is a membrane bound hemoprotein which function as an electron carrier for several membrane bound oxygenases. May play a key role in the modification by desaturation of fatty acids in the endoplasmic reticulum, which in the developing seed is utilized for membrane synthesis and in the developmentally regulated production of large amounts of storage lipids. The chain is Cytochrome b5, seed isoform from Nicotiana tabacum (Common tobacco).